The chain runs to 101 residues: MNSIVNFSQQLIQNFQEVSQKTAADSSNLKAFAYLGAGLAMIGVIGVGAGQGYAAGKACDAIARNPEAQKQVFRVLVIGTAISETSSIYALLVALILIFVG.

A run of 2 helical transmembrane segments spans residues 31–51 (AFAY…GAGQ) and 81–101 (AISE…IFVG).

Belongs to the ATPase C chain family. F-type ATPases have 2 components, F(1) - the catalytic core - and F(0) - the membrane proton channel. F(1) has five subunits: alpha(3), beta(3), gamma(1), delta(1), epsilon(1). F(0) has three main subunits: a(1), b(2) and c(10-14). The alpha and beta chains form an alternating ring which encloses part of the gamma chain. F(1) is attached to F(0) by a central stalk formed by the gamma and epsilon chains, while a peripheral stalk is formed by the delta and b chains.

It is found in the cell membrane. F(1)F(0) ATP synthase produces ATP from ADP in the presence of a proton or sodium gradient. F-type ATPases consist of two structural domains, F(1) containing the extramembraneous catalytic core and F(0) containing the membrane proton channel, linked together by a central stalk and a peripheral stalk. During catalysis, ATP synthesis in the catalytic domain of F(1) is coupled via a rotary mechanism of the central stalk subunits to proton translocation. Its function is as follows. Key component of the F(0) channel; it plays a direct role in translocation across the membrane. A homomeric c-ring of between 10-14 subunits forms the central stalk rotor element with the F(1) delta and epsilon subunits. The sequence is that of ATP synthase subunit c from Mesomycoplasma hyopneumoniae (strain 232) (Mycoplasma hyopneumoniae).